A 367-amino-acid chain; its full sequence is Heme A synthase (367 aa).

5 consecutive transmembrane segments (helical) span residues 25–45 (ALRF…LVGG), 111–131 (LIAR…WLTG), 139–159 (WPLV…WWMV), 174–194 (LATH…IMRG), and 210–230 (GFAA…ALVA). His-274 contacts heme. The next 3 membrane-spanning stretches (helical) occupy residues 276–296 (IGAY…LRAA), 305–325 (AVVL…TLLM), and 327–347 (VPLH…GFAI). His-335 provides a ligand contact to heme.

The protein belongs to the COX15/CtaA family. Type 2 subfamily. In terms of assembly, interacts with CtaB. Heme b is required as a cofactor.

Its subcellular location is the cell membrane. It catalyses the reaction Fe(II)-heme o + 2 A + H2O = Fe(II)-heme a + 2 AH2. It functions in the pathway porphyrin-containing compound metabolism; heme A biosynthesis; heme A from heme O: step 1/1. In terms of biological role, catalyzes the conversion of heme O to heme A by two successive hydroxylations of the methyl group at C8. The first hydroxylation forms heme I, the second hydroxylation results in an unstable dihydroxymethyl group, which spontaneously dehydrates, resulting in the formyl group of heme A. In Rhizobium leguminosarum bv. trifolii (strain WSM2304), this protein is Heme A synthase.